Here is a 437-residue protein sequence, read N- to C-terminus: Chromosomal replication initiator protein DnaA (437 aa).

The tract at residues 1–72 (MEQFNAFKSL…ESLYEGIKSV (72 aa)) is domain I, interacts with DnaA modulators. Residues 72–99 (VNFVNEQDFFFNLAKLEENSRDTLYQNS) form a domain II region. Residues 100 to 320 (GLSKNYTFQN…GIATKLLFFA (221 aa)) form a domain III, AAA+ region region. Residues Gly-144, Gly-146, Lys-147, and Thr-148 each contribute to the ATP site. Residues 321–437 (KTSKQNLINT…LRDVITSLVI (117 aa)) are domain IV, binds dsDNA.

This sequence belongs to the DnaA family. In terms of assembly, oligomerizes as a right-handed, spiral filament on DNA at oriC.

It localises to the cytoplasm. Plays an essential role in the initiation and regulation of chromosomal replication. ATP-DnaA binds to the origin of replication (oriC) to initiate formation of the DNA replication initiation complex once per cell cycle. Binds the DnaA box (a 9 base pair repeat at the origin) and separates the double-stranded (ds)DNA. Forms a right-handed helical filament on oriC DNA; dsDNA binds to the exterior of the filament while single-stranded (ss)DNA is stabiized in the filament's interior. The ATP-DnaA-oriC complex binds and stabilizes one strand of the AT-rich DNA unwinding element (DUE), permitting loading of DNA polymerase. After initiation quickly degrades to an ADP-DnaA complex that is not apt for DNA replication. Binds acidic phospholipids. The sequence is that of Chromosomal replication initiator protein DnaA from Mycoplasma genitalium (strain ATCC 33530 / DSM 19775 / NCTC 10195 / G37) (Mycoplasmoides genitalium).